We begin with the raw amino-acid sequence, 2346 residues long: Acetyl-CoA carboxylase 1 (2346 aa).

At methionine 1 the chain carries N-acetylmethionine. Phosphoserine is present on residues serine 5, serine 23, serine 25, serine 29, serine 34, serine 48, serine 50, and serine 53. A Phosphothreonine modification is found at threonine 58. The residue at position 78 (serine 78) is a Phosphoserine. Position 80 is a phosphoserine; by AMPK (serine 80). In terms of domain architecture, Biotin carboxylation spans 117–618; sequence VIEKVLIANN…GTGWLDRLIA (502 aa). In terms of domain architecture, ATP-grasp spans 275-466; it reads SKRILNVPQE…LPAAQLQIAM (192 aa). 315 to 320 serves as a coordination point for ATP; that stretch reads GGGGKG. Residues glutamate 424, glutamate 437, and asparagine 439 each coordinate Mg(2+). The Mn(2+) site is built by glutamate 424, glutamate 437, and asparagine 439. Arginine 441 is a catalytic residue. Phosphothreonine is present on threonine 610. The region spanning 745–819 is the Biotinyl-binding domain; it reads FEKENDPSVL…DPGCVIAKMQ (75 aa). Position 786 is an N6-biotinyllysine (lysine 786). Residues serine 835, serine 1201, serine 1216, and serine 1218 each carry the phosphoserine modification. Phosphothreonine is present on threonine 1227. Phosphoserine occurs at positions 1259, 1263, and 1273. Lysine 1334 bears the N6-acetyllysine mark. Residues 1576–1914 enclose the CoA carboxyltransferase N-terminal domain; sequence PYVTKDQLQS…SVYSSVPLLN (339 aa). Residues 1576-2234 are carboxyltransferase; the sequence is PYVTKDQLQS…EDLVKKKIHN (659 aa). Arginine 1823, lysine 2127, and arginine 2129 together coordinate CoA. The region spanning 1918 to 2234 is the CoA carboxyltransferase C-terminal domain; that stretch reads PIDRVIEFVP…EDLVKKKIHN (317 aa). A Phosphothreonine modification is found at threonine 2153.

In terms of assembly, monomer, homodimer, and homotetramer. Can form filamentous polymers. Interacts in its inactive phosphorylated form with the BRCT domains of BRCA1 which prevents ACACA dephosphorylation and inhibits lipid synthesis. Interacts with MID1IP1; interaction with MID1IP1 promotes oligomerization and increases its activity. It depends on Mg(2+) as a cofactor. Mn(2+) is required as a cofactor. The cofactor is biotin. In terms of processing, phosphorylation on Ser-1263 is required for interaction with BRCA1. Phosphorylation at Ser-80 by AMPK inactivates enzyme activity. Post-translationally, the biotin cofactor is covalently attached to the central biotinyl-binding domain and is required for the catalytic activity.

The protein resides in the cytoplasm. It is found in the cytosol. The enzyme catalyses hydrogencarbonate + acetyl-CoA + ATP = malonyl-CoA + ADP + phosphate + H(+). It participates in lipid metabolism; malonyl-CoA biosynthesis; malonyl-CoA from acetyl-CoA: step 1/1. Inhibited by phosphorylation. Citrate promotes oligomerization of the protein into filaments that correspond to the most active form of the carboxylase. In terms of biological role, cytosolic enzyme that catalyzes the carboxylation of acetyl-CoA to malonyl-CoA, the first and rate-limiting step of de novo fatty acid biosynthesis. This is a 2 steps reaction starting with the ATP-dependent carboxylation of the biotin carried by the biotin carboxyl carrier (BCC) domain followed by the transfer of the carboxyl group from carboxylated biotin to acetyl-CoA. The protein is Acetyl-CoA carboxylase 1 of Bos taurus (Bovine).